A 611-amino-acid chain; its full sequence is 1,4-alpha-glucan branching enzyme GlgB (611 aa).

The active-site Nucleophile is the Asp302. Residue Glu343 is the Proton donor of the active site.

This sequence belongs to the glycosyl hydrolase 13 family. GlgB subfamily. In terms of assembly, monomer.

It carries out the reaction Transfers a segment of a (1-&gt;4)-alpha-D-glucan chain to a primary hydroxy group in a similar glucan chain.. It participates in glycan biosynthesis; glycogen biosynthesis. In terms of biological role, catalyzes the formation of the alpha-1,6-glucosidic linkages in glycogen by scission of a 1,4-alpha-linked oligosaccharide from growing alpha-1,4-glucan chains and the subsequent attachment of the oligosaccharide to the alpha-1,6 position. In Fusobacterium nucleatum subsp. nucleatum (strain ATCC 25586 / DSM 15643 / BCRC 10681 / CIP 101130 / JCM 8532 / KCTC 2640 / LMG 13131 / VPI 4355), this protein is 1,4-alpha-glucan branching enzyme GlgB.